We begin with the raw amino-acid sequence, 92 residues long: PqqA binding protein (92 aa).

It belongs to the PqqD family. In terms of assembly, monomer. Interacts with PqqE.

It participates in cofactor biosynthesis; pyrroloquinoline quinone biosynthesis. Functionally, functions as a PqqA binding protein and presents PqqA to PqqE, in the pyrroloquinoline quinone (PQQ) biosynthetic pathway. In Pseudomonas paraeruginosa (strain DSM 24068 / PA7) (Pseudomonas aeruginosa (strain PA7)), this protein is PqqA binding protein.